The primary structure comprises 620 residues: 1-deoxy-D-xylulose-5-phosphate synthase (620 aa).

Residues histidine 80 and 121-123 contribute to the thiamine diphosphate site; that span reads GHS. Residue aspartate 152 coordinates Mg(2+). Thiamine diphosphate contacts are provided by residues 153–154, asparagine 181, tyrosine 288, and glutamate 370; that span reads GA. Asparagine 181 contributes to the Mg(2+) binding site.

The protein belongs to the transketolase family. DXPS subfamily. As to quaternary structure, homodimer. Mg(2+) serves as cofactor. Thiamine diphosphate is required as a cofactor.

The catalysed reaction is D-glyceraldehyde 3-phosphate + pyruvate + H(+) = 1-deoxy-D-xylulose 5-phosphate + CO2. It participates in metabolic intermediate biosynthesis; 1-deoxy-D-xylulose 5-phosphate biosynthesis; 1-deoxy-D-xylulose 5-phosphate from D-glyceraldehyde 3-phosphate and pyruvate: step 1/1. Its function is as follows. Catalyzes the acyloin condensation reaction between C atoms 2 and 3 of pyruvate and glyceraldehyde 3-phosphate to yield 1-deoxy-D-xylulose-5-phosphate (DXP). This Shigella boydii serotype 18 (strain CDC 3083-94 / BS512) protein is 1-deoxy-D-xylulose-5-phosphate synthase.